A 330-amino-acid polypeptide reads, in one-letter code: Ferrochelatase (330 aa).

The Fe cation site is built by histidine 200 and glutamate 281.

Belongs to the ferrochelatase family.

It localises to the cytoplasm. The enzyme catalyses heme b + 2 H(+) = protoporphyrin IX + Fe(2+). The protein operates within porphyrin-containing compound metabolism; protoheme biosynthesis; protoheme from protoporphyrin-IX: step 1/1. In terms of biological role, catalyzes the ferrous insertion into protoporphyrin IX. In Marinomonas sp. (strain MWYL1), this protein is Ferrochelatase.